The primary structure comprises 640 residues: SH3 domain-containing protein 21 (640 aa).

The interval 1–60 (MVQSELQLQPRAGGRAEAASWGDRGNDKGGLGNPDMPSVSPGPQRPPKLSSLAYDSPPDY) is disordered. Residues 65–126 (SHPEVYRVLF…PDNFVLPPPP (62 aa)) form the SH3 domain. Disordered stretches follow at residues 133 to 361 (RKVV…PLGD), 401 to 551 (YFVA…PDSQ), and 618 to 640 (VQVMQGTQKSQTPRVIHTQTQTY). The segment covering 177–186 (PSRDSQKLTS) has biased composition (basic and acidic residues). Residues 210–220 (TQTPQQRSVSS) are compositionally biased toward polar residues. 3 stretches are compositionally biased toward basic and acidic residues: residues 401 to 416 (YFVAKEDPSSQEEAHT), 459 to 469 (ALEKPHPHEEA), and 494 to 532 (RPLREEVLPKEGVASKEEVTLKEELPPKEEVAPKEEVPP). Positions 572–626 (VDVTSLRGEVESLRRALELMEVQLERKLTDIWEELKSEKEQRRRLEVQVMQGTQK) form a coiled coil. Polar residues predominate over residues 621–640 (MQGTQKSQTPRVIHTQTQTY).

The sequence is that of SH3 domain-containing protein 21 (SH3D21) from Homo sapiens (Human).